Consider the following 71-residue polypeptide: Dermaseptin-PT9 (71 aa).

An N-terminal signal peptide occupies residues 1–22; it reads MAFLKKSLFLVLFLGLVSLSIC. Residues 23 to 43 constitute a propeptide that is removed on maturation; that stretch reads EEEKRENEMEQEDDEQSEMKR. Val68 is subject to Valine amide. The propeptide occupies 69 to 71; that stretch reads GEQ.

It belongs to the frog skin active peptide (FSAP) family. Dermaseptin subfamily. As to expression, expressed by the skin glands.

It is found in the secreted. The protein localises to the target cell membrane. In terms of biological role, antimicrobial peptide with activity against fungi, Gram-positive and Gram-negative bacteria. Is active against S.aureus (MIC=16 uM), MRSA (MIC=32 uM), E.faecalis (MIC=16 uM), E.coli (MIC=8 uM), P.aeruginosa (MIC=16 uM), K.pneumoniae (MIC=8 uM), and C.albicans (MIC=64 uM). Also inhibits biofilm formation. Acts by disrupting cell membranes. Also exhibits anti-proliferative effect against various human cancer cells. Shows weak hemolytic activity towards horse erythrocytes. This chain is Dermaseptin-PT9, found in Phyllomedusa tarsius (Brownbelly leaf frog).